We begin with the raw amino-acid sequence, 42 residues long: Delta-hexatoxin-Ar1a (42 aa).

Cystine bridges form between cysteine 1/cysteine 15, cysteine 8/cysteine 20, cysteine 14/cysteine 31, and cysteine 16/cysteine 42.

Belongs to the neurotoxin 06 (delta-actx) family. Expressed by the venom gland.

Its subcellular location is the secreted. Its function is as follows. Inhibits tetrodotoxin-sensitive voltage-gated sodium channels (Nav) by binding to site 3. It slows the inactivation, causes a prolongation of action potential duration resulting in repetitive firing in autonomic and motor nerve fibers. Does not depolarize the resting potential. Does not affect tetrodotoxin-resistant sodium channels. This lethal neurotoxin is active on both insect and mammalian voltage-gated sodium channels. The sequence is that of Delta-hexatoxin-Ar1a from Atrax robustus (Sydney funnel-web spider).